Here is a 188-residue protein sequence, read N- to C-terminus: Probable DNA-directed RNA polymerase subunit delta (188 aa).

An HTH HARE-type domain is found at 14–83; it reads LSMIEVARAI…GDNKWGLRSW (70 aa). The disordered stretch occupies residues 117–188; the sequence is GDEDAIDYSD…EDDEDDEEEE (72 aa).

This sequence belongs to the RpoE family. RNAP is composed of a core of 2 alpha, a beta and a beta' subunits. The core is associated with a delta subunit and one of several sigma factors.

Participates in both the initiation and recycling phases of transcription. In the presence of the delta subunit, RNAP displays an increased specificity of transcription, a decreased affinity for nucleic acids, and an increased efficiency of RNA synthesis because of enhanced recycling. The chain is Probable DNA-directed RNA polymerase subunit delta from Streptococcus uberis (strain ATCC BAA-854 / 0140J).